We begin with the raw amino-acid sequence, 352 residues long: Alanine racemase (352 aa).

Lysine 33 functions as the Proton acceptor; specific for D-alanine in the catalytic mechanism. Position 33 is an N6-(pyridoxal phosphate)lysine (lysine 33). Arginine 129 contacts substrate. The Proton acceptor; specific for L-alanine role is filled by tyrosine 250. Methionine 298 provides a ligand contact to substrate.

It belongs to the alanine racemase family. The cofactor is pyridoxal 5'-phosphate.

The enzyme catalyses L-alanine = D-alanine. It functions in the pathway amino-acid biosynthesis; D-alanine biosynthesis; D-alanine from L-alanine: step 1/1. Catalyzes the interconversion of L-alanine and D-alanine. May also act on other amino acids. The polypeptide is Alanine racemase (alr) (Neisseria gonorrhoeae (strain ATCC 700825 / FA 1090)).